The primary structure comprises 64 residues: MKAKEINELTTAEMLEKEKQFKEELFNLRFQLATGQLENTARLKEVRKNIARIKTALRQQELNK.

Belongs to the universal ribosomal protein uL29 family.

This Ligilactobacillus salivarius (strain UCC118) (Lactobacillus salivarius) protein is Large ribosomal subunit protein uL29.